Consider the following 211-residue polypeptide: Uracil phosphoribosyltransferase (211 aa).

Residues Arg-81, Arg-106, and 133–141 (DPMLATGNS) each bind 5-phospho-alpha-D-ribose 1-diphosphate. Residues Ile-196 and 201-203 (GDA) each bind uracil. 5-phospho-alpha-D-ribose 1-diphosphate is bound at residue Asp-202.

The protein belongs to the UPRTase family. Mg(2+) is required as a cofactor.

It catalyses the reaction UMP + diphosphate = 5-phospho-alpha-D-ribose 1-diphosphate + uracil. The protein operates within pyrimidine metabolism; UMP biosynthesis via salvage pathway; UMP from uracil: step 1/1. With respect to regulation, allosterically activated by GTP. Functionally, catalyzes the conversion of uracil and 5-phospho-alpha-D-ribose 1-diphosphate (PRPP) to UMP and diphosphate. This chain is Uracil phosphoribosyltransferase, found in Paracoccus denitrificans (strain Pd 1222).